The chain runs to 357 residues: Transcription factor PCF6 (357 aa).

Residues 1-29 form a disordered region; it reads MEAAVGDGEGGGGGGGRGKRGRGGGGGEM. Positions 7–16 are enriched in gly residues; that stretch reads DGEGGGGGGG. In terms of domain architecture, TCP spans 52–110; it reads GKDRHSKVYTAKGIRDRRVRLSVATAIQFYDLQDRLGFDQPSKAIEWLINAASPAIDTL. Disordered regions lie at residues 125–162 and 281–307; these read AADA…DKEV and ANRG…QQLQ. Polar residues-rich tracts occupy residues 142–155 and 284–295; these read LSNK…SETS and GTLQSNSPSNMS.

Forms homodimers and heterodimers.

It localises to the nucleus. In terms of biological role, transcription activator. Binds the promoter core sequence 5'-GGNCC-3'. This is Transcription factor PCF6 (PCF6) from Oryza sativa subsp. japonica (Rice).